A 224-amino-acid chain; its full sequence is Urease accessory protein UreF (224 aa).

This sequence belongs to the UreF family. As to quaternary structure, ureD, UreF and UreG form a complex that acts as a GTP-hydrolysis-dependent molecular chaperone, activating the urease apoprotein by helping to assemble the nickel containing metallocenter of UreC. The UreE protein probably delivers the nickel.

Its subcellular location is the cytoplasm. Its function is as follows. Required for maturation of urease via the functional incorporation of the urease nickel metallocenter. The sequence is that of Urease accessory protein UreF from Klebsiella pneumoniae subsp. pneumoniae (strain ATCC 700721 / MGH 78578).